The sequence spans 278 residues: Tryptophan synthase alpha chain (278 aa).

Residues Glu-50 and Asp-61 each act as proton acceptor in the active site.

This sequence belongs to the TrpA family. As to quaternary structure, tetramer of two alpha and two beta chains.

It catalyses the reaction (1S,2R)-1-C-(indol-3-yl)glycerol 3-phosphate + L-serine = D-glyceraldehyde 3-phosphate + L-tryptophan + H2O. The protein operates within amino-acid biosynthesis; L-tryptophan biosynthesis; L-tryptophan from chorismate: step 5/5. The alpha subunit is responsible for the aldol cleavage of indoleglycerol phosphate to indole and glyceraldehyde 3-phosphate. The protein is Tryptophan synthase alpha chain of Rhodopseudomonas palustris (strain HaA2).